The sequence spans 330 residues: Tryptophan--tRNA ligase (330 aa).

ATP-binding positions include 10–12 (QPS) and 18–19 (GN). Positions 11–19 (PSGSVTLGN) match the 'HIGH' region motif. Residue aspartate 133 participates in L-tryptophan binding. Residues 145-147 (GED), isoleucine 184, and 193-197 (KMSKS) each bind ATP. The 'KMSKS' region signature appears at 193–197 (KMSKS).

This sequence belongs to the class-I aminoacyl-tRNA synthetase family. Homodimer.

It is found in the cytoplasm. It carries out the reaction tRNA(Trp) + L-tryptophan + ATP = L-tryptophyl-tRNA(Trp) + AMP + diphosphate + H(+). Its function is as follows. Catalyzes the attachment of tryptophan to tRNA(Trp). The protein is Tryptophan--tRNA ligase of Bacillus subtilis (strain 168).